A 349-amino-acid chain; its full sequence is GMP reductase (349 aa).

108–131 (LDFFKIKKIFSLSSELKYICIDVA) serves as a coordination point for NADP(+). Gly-181 and Gly-183 together coordinate K(+). The active-site Thioimidate intermediate is the Cys-186. Residue 216 to 239 (IISDGGCTVSGDIAKAFGGGADFV) coordinates NADP(+).

Belongs to the IMPDH/GMPR family. GuaC type 1 subfamily. Homotetramer.

It carries out the reaction IMP + NH4(+) + NADP(+) = GMP + NADPH + 2 H(+). Its function is as follows. Catalyzes the irreversible NADPH-dependent deamination of GMP to IMP. It functions in the conversion of nucleobase, nucleoside and nucleotide derivatives of G to A nucleotides, and in maintaining the intracellular balance of A and G nucleotides. The polypeptide is GMP reductase (Buchnera aphidicola subsp. Schizaphis graminum (strain Sg)).